The following is a 171-amino-acid chain: uncharacterized protein (171 aa).

This is an uncharacterized protein from Bacillus subtilis (strain 168).